The sequence spans 316 residues: ATP synthase gamma chain (316 aa).

This sequence belongs to the ATPase gamma chain family. F-type ATPases have 2 components, CF(1) - the catalytic core - and CF(0) - the membrane proton channel. CF(1) has five subunits: alpha(3), beta(3), gamma(1), delta(1), epsilon(1). CF(0) has three main subunits: a, b and c.

It localises to the cellular thylakoid membrane. In terms of biological role, produces ATP from ADP in the presence of a proton gradient across the membrane. The gamma chain is believed to be important in regulating ATPase activity and the flow of protons through the CF(0) complex. The sequence is that of ATP synthase gamma chain from Prochlorococcus marinus subsp. pastoris (strain CCMP1986 / NIES-2087 / MED4).